Reading from the N-terminus, the 434-residue chain is Trigger factor (434 aa).

A PPIase FKBP-type domain is found at 160 to 245; that stretch reads GDKVKMNFVG…LTEVQAANLP (86 aa).

The protein belongs to the FKBP-type PPIase family. Tig subfamily.

Its subcellular location is the cytoplasm. It catalyses the reaction [protein]-peptidylproline (omega=180) = [protein]-peptidylproline (omega=0). Its function is as follows. Involved in protein export. Acts as a chaperone by maintaining the newly synthesized protein in an open conformation. Functions as a peptidyl-prolyl cis-trans isomerase. The sequence is that of Trigger factor from Shewanella baltica (strain OS185).